The following is a 651-amino-acid chain: Protein cueball (651 aa).

Positions 1 to 21 are cleaved as a signal peptide; the sequence is MILRLFILLSIITVYLQLSVG. Topologically, residues 22–540 are extracellular; sequence IQQQFEFAIT…VCLAPNAWTG (519 aa). N77, N102, and N114 each carry an N-linked (GlcNAc...) asparagine glycan. LDL-receptor class B repeat units lie at residues 115–162, 163–207, and 208–253; these read RTIY…DICG, RKLY…DQGA, and KRIF…TRNA. The N-linked (GlcNAc...) asparagine glycan is linked to N183. Residues 290 to 311 form a disordered region; the sequence is VEGEEGTGAMDDNDIWPVGDFE. N324 is a glycosylation site (N-linked (GlcNAc...) asparagine). 3 EGF-like domains span residues 374-408, 409-440, and 443-480; these read QLDE…TRCE, TNEC…YSGE, and EVKK…LRCE. 7 cysteine pairs are disulfide-bonded: C383–C396, C398–C407, C412–C421, C416–C431, C447–C457, C451–C468, and C470–C479. N-linked (GlcNAc...) asparagine glycosylation is found at N482 and N499. A helical membrane pass occupies residues 541 to 561; that stretch reads SVLMPLMISLILILLLLTIFI. Topologically, residues 562–651 are cytoplasmic; sequence HGLRRLYKPK…LIHNMEDDLY (90 aa).

The protein belongs to the cueball family.

The protein resides in the cell membrane. Has a role in spermatogenesis and oogenesis. The sequence is that of Protein cueball from Drosophila willistoni (Fruit fly).